The chain runs to 420 residues: Nucleoporin NUP42 (420 aa).

The C3H1-type zinc finger occupies 1 to 25 (MTICQFFLQGRCRFGDRCWNEHPGA). An FG 1 repeat occupies 14 to 15 (FG). Residues 25–111 (ARGAGGARQP…FASPLSDEQK (87 aa)) form a disordered region. The span at 42-67 (SGNNRRGWNASSQRYSNVIQPSSFPK) shows a compositional bias: polar residues. 10 FG repeats span residues 82-83 (FG), 95-96 (FG), 218-219 (FG), 220-221 (FG), 228-229 (FG), 265-266 (FG), 271-272 (FG), 288-289 (FG), 345-346 (FG), and 364-365 (FG). Polar residues predominate over residues 87-102 (SGASTSRGFGSSQNPF). The tract at residues 323 to 345 (MAASPSGSTTAPPLRSGSSVVGF) is disordered. The segment at 365 to 420 (GGSGISTSVLASGAADNALFTPRDQLMKEELEQFQSQRFTLGKIPLKPPPVELLTV) is interaction with GLE1.

As to quaternary structure, probable component of the nuclear pore complex (NPC). Interacts with nuclear export protein NXF1. Interacts with GLE1. Able to form a heterotrimer with NUP155 and GLE1 in vitro. Interacts with XPO1. In terms of processing, O-glycosylated.

It localises to the nucleus. The protein resides in the nuclear pore complex. Its subcellular location is the nucleus membrane. Its function is as follows. Required for the export of mRNAs containing poly(A) tails from the nucleus into the cytoplasm. This is Nucleoporin NUP42 (Nup42) from Mus musculus (Mouse).